The sequence spans 371 residues: 4-hydroxyphenylpyruvate dioxygenase-like protein (371 aa).

VOC domains lie at 7–135 (RLCH…LLQR) and 160–328 (HVDH…VFTK). Fe cation contacts are provided by H163, H258, and E339.

This sequence belongs to the 4HPPD family. Fe cation serves as cofactor.

Its subcellular location is the mitochondrion. It carries out the reaction 3-(4-hydroxyphenyl)pyruvate + O2 = (S)-4-hydroxymandelate + CO2. Its function is as follows. Iron-dependent dioxygenase that catalyzes the conversion of 4-hydroxyphenylpyruvate (4-HPPA) to 4-hydroxymandelate (4-HMA) in the mitochondria, one of the steps in the biosynthesis of coenzyme Q10 from tyrosine. The polypeptide is 4-hydroxyphenylpyruvate dioxygenase-like protein (Rattus norvegicus (Rat)).